A 431-amino-acid chain; its full sequence is tRNA(Ile)-lysidine synthase (431 aa).

25–30 (SGGPDS) lines the ATP pocket.

This sequence belongs to the tRNA(Ile)-lysidine synthase family.

It is found in the cytoplasm. The catalysed reaction is cytidine(34) in tRNA(Ile2) + L-lysine + ATP = lysidine(34) in tRNA(Ile2) + AMP + diphosphate + H(+). In terms of biological role, ligates lysine onto the cytidine present at position 34 of the AUA codon-specific tRNA(Ile) that contains the anticodon CAU, in an ATP-dependent manner. Cytidine is converted to lysidine, thus changing the amino acid specificity of the tRNA from methionine to isoleucine. The polypeptide is tRNA(Ile)-lysidine synthase (Lactobacillus johnsonii (strain CNCM I-12250 / La1 / NCC 533)).